The following is an 88-amino-acid chain: MISKARKQEIILKFGKNPKNTGNTSVQIALLTEDIERLKLHFLKNKKDKHSMRGFIAKVNKRKKLLNYLRINSFDTYKETIEALNIRK.

The protein belongs to the universal ribosomal protein uS15 family. As to quaternary structure, part of the 30S ribosomal subunit. Forms a bridge to the 50S subunit in the 70S ribosome, contacting the 23S rRNA.

Functionally, one of the primary rRNA binding proteins, it binds directly to 16S rRNA where it helps nucleate assembly of the platform of the 30S subunit by binding and bridging several RNA helices of the 16S rRNA. Forms an intersubunit bridge (bridge B4) with the 23S rRNA of the 50S subunit in the ribosome. This is Small ribosomal subunit protein uS15 from Mesomycoplasma hyopneumoniae (strain 232) (Mycoplasma hyopneumoniae).